A 124-amino-acid chain; its full sequence is Large ribosomal subunit protein bL12 (124 aa).

It belongs to the bacterial ribosomal protein bL12 family. In terms of assembly, homodimer. Part of the ribosomal stalk of the 50S ribosomal subunit. Forms a multimeric L10(L12)X complex, where L10 forms an elongated spine to which 2 to 4 L12 dimers bind in a sequential fashion. Binds GTP-bound translation factors.

Its function is as follows. Forms part of the ribosomal stalk which helps the ribosome interact with GTP-bound translation factors. Is thus essential for accurate translation. This is Large ribosomal subunit protein bL12 from Brucella anthropi (strain ATCC 49188 / DSM 6882 / CCUG 24695 / JCM 21032 / LMG 3331 / NBRC 15819 / NCTC 12168 / Alc 37) (Ochrobactrum anthropi).